The sequence spans 245 residues: E3 ubiquitin-protein ligase RNF138 (245 aa).

Residues 18–58 (CPVCQEVLKTPVRTAACQHVFCRKCFLTAMRESGIHCPLCR) form an RING-type zinc finger. Zn(2+)-binding residues include Cys86, Cys89, His101, and Cys105. The C2HC RNF-type zinc finger occupies 86 to 105 (CRCCSKKIKFYRMRHHYKSC). Residues 128–154 (VRSSNRSETSASDNTETYQEDTSSSGH) form a disordered region. Thr142 is subject to Phosphothreonine. 2 consecutive C2H2-type zinc fingers follow at residues 157–180 (FKCP…NSNH) and 187–215 (VTCP…NQRH). The region spanning 225 to 243 (LQLDEETQYQTAVEESFQV) is the UIM domain.

Interacts with NLK. Interacts with XRCC5/Ku80. Interacts with RBBP8/CtIP. In terms of processing, auto-ubiquitinated.

The protein localises to the chromosome. It catalyses the reaction S-ubiquitinyl-[E2 ubiquitin-conjugating enzyme]-L-cysteine + [acceptor protein]-L-lysine = [E2 ubiquitin-conjugating enzyme]-L-cysteine + N(6)-ubiquitinyl-[acceptor protein]-L-lysine.. The protein operates within protein modification; protein ubiquitination. Functionally, E3 ubiquitin-protein ligase involved in DNA damage response by promoting DNA resection and homologous recombination. Recruited to sites of double-strand breaks following DNA damage and specifically promotes double-strand break repair via homologous recombination. Two different, non-exclusive, mechanisms have been proposed. According to a report, regulates the choice of double-strand break repair by favoring homologous recombination over non-homologous end joining (NHEJ): acts by mediating ubiquitination of XRCC5/Ku80, leading to remove the Ku complex from DNA breaks, thereby promoting homologous recombination. According to another report, cooperates with UBE2Ds E2 ubiquitin ligases (UBE2D1, UBE2D2, UBE2D3 or UBE2D4) to promote homologous recombination by mediating ubiquitination of RBBP8/CtIP. Together with NLK, involved in the ubiquitination and degradation of TCF/LEF. Also exhibits auto-ubiquitination activity in combination with UBE2K. May act as a negative regulator in the Wnt/beta-catenin-mediated signaling pathway. This Mus musculus (Mouse) protein is E3 ubiquitin-protein ligase RNF138.